We begin with the raw amino-acid sequence, 603 residues long: Growth-regulating factor 6 (603 aa).

The disordered stretch occupies residues 34-58; that stretch reads KHGRGNAGDQEHEWRPPAKQARGGD. In terms of domain architecture, QLQ spans 158–193; it reads PFTPSQWIELEHQALIYKYLAANSPVPHSLLIPIRR. The region spanning 223–267 is the WRC domain; that stretch reads DPEPGRCRRTDGKKWRCSRDAVADQKYCERHMNRGRHRSRKHVEG. Short sequence motifs (bipartite nuclear localization signal) lie at residues 228 to 238 and 256 to 263; these read RCRRTDGKKWR and RGRHRSRK. The span at 561–571 shows a compositional bias: low complexity; it reads FGSVSSSTGSS. Positions 561–582 are disordered; that stretch reads FGSVSSSTGSSPRLENHSVYDG.

This sequence belongs to the GRF family.

The protein localises to the nucleus. Functionally, transcription activator that plays a regulatory role in gibberellin-induced stem elongation. This is Growth-regulating factor 6 (GRF6) from Oryza sativa subsp. japonica (Rice).